The sequence spans 343 residues: GTPase Obg (343 aa).

One can recognise an Obg domain in the interval methionine 1–isoleucine 159. The region spanning alanine 160 to alanine 327 is the OBG-type G domain. Residues glycine 166–serine 173, phenylalanine 191–histidine 195, aspartate 212–glycine 215, serine 279–aspartate 282, and serine 308–valine 310 each bind GTP. Mg(2+)-binding residues include serine 173 and threonine 193.

The protein belongs to the TRAFAC class OBG-HflX-like GTPase superfamily. OBG GTPase family. In terms of assembly, monomer. The cofactor is Mg(2+).

Its subcellular location is the cytoplasm. An essential GTPase which binds GTP, GDP and possibly (p)ppGpp with moderate affinity, with high nucleotide exchange rates and a fairly low GTP hydrolysis rate. Plays a role in control of the cell cycle, stress response, ribosome biogenesis and in those bacteria that undergo differentiation, in morphogenesis control. The chain is GTPase Obg from Mesorhizobium japonicum (strain LMG 29417 / CECT 9101 / MAFF 303099) (Mesorhizobium loti (strain MAFF 303099)).